A 314-amino-acid chain; its full sequence is 2,3-dihydroxyphenylpropionate/2,3-dihydroxicinnamic acid 1,2-dioxygenase 1 (314 aa).

Residue H115 is the Proton donor of the active site. H179 functions as the Proton acceptor in the catalytic mechanism.

It belongs to the LigB/MhpB extradiol dioxygenase family. In terms of assembly, homotetramer. It depends on Fe(2+) as a cofactor.

The enzyme catalyses 3-(2,3-dihydroxyphenyl)propanoate + O2 = (2Z,4E)-2-hydroxy-6-oxonona-2,4-dienedioate + H(+). It carries out the reaction (2E)-3-(2,3-dihydroxyphenyl)prop-2-enoate + O2 = (2Z,4E,7E)-2-hydroxy-6-oxonona-2,4,7-trienedioate + H(+). It functions in the pathway aromatic compound metabolism; 3-phenylpropanoate degradation. In terms of biological role, catalyzes the non-heme iron(II)-dependent oxidative cleavage of 2,3-dihydroxyphenylpropionic acid and 2,3-dihydroxicinnamic acid into 2-hydroxy-6-ketononadienedioate and 2-hydroxy-6-ketononatrienedioate, respectively. The polypeptide is 2,3-dihydroxyphenylpropionate/2,3-dihydroxicinnamic acid 1,2-dioxygenase 1 (Pseudomonas putida (Arthrobacter siderocapsulatus)).